Reading from the N-terminus, the 1547-residue chain is MADIKSMFNKMSSPKQNGTGEPAPAKGQKGAIEKIYQKKSQLEHILLRPDTYIGSVERATETMWVYDKVKECMMQKELTSVPDCSFPGLYKIYDEILVNAADNKQRDPKMDVIKIDINQETNTISVYNNGSGIPVVMHKDEKMYVPTMIFGHLLTSSNYNDEEEKVTGGRNGYGAKLCNIFSTKFTVETASKQYKKHFKQTWGSNMTKASEPKIKDSGKDDDFTKIVFSPDLAKFKMEKLEDDIVLLMSRRAYDVAASSQGVKVYLNGERLKINKFKDYVDLYIKGKDDENGQPLKVVYEKVSDRWEVALTISDMGFQQVSFVNSIATTKGGKHVDTVADSVVKNVLEVLKKKNKGGVNIKPYQVKTHMWLFVNCLIVNPTFDSQTKENMTLQAKSFGSKCNLSEKFITAVTKCGLVESVLTWAKFKAQDQLVKASGKKQSKLKGIPKLEDANDAGTKNAHLCTLILTEGDSAKTLAVSGLSVVGRDHYGVFPLEGKPLNVRDASHKQVLENVEINNLIKILGLQYKKKYNSVDDLKTLRYGKVMIMADQDQDGSHIKGLIINFIHHNWPELLKLPFLEEFITPIVKATKKDKEISFYSLPEFEEWKKETENHHTYNIKYYKGLGTSTSKEAKEYFQNMDRHRIRFKYSGPTDDHHIELAFSKKGADQRKEWLTNHMDEVKRRKEIGLSERYLYTKETKTVTYSDFVNLELVLFSNGDNVRSIPSMIDGLKPGQRKVIFTCIKRNDKREVKVAQLAGSVAEHSAYHHGEQSLAMTIVNLAQNYVGSNNINLLEPRGQFGTRLSGGKDSASPRYIFTLMSPLTRLIFHPHDDPLLVHEFEDNQKIEPVYYLPIIPMVLVNGVEGIGTGWSTKIPNYNPRDIAENLRRLLDGEKPKVMHPWYKNFKGNVEGFGDKYVISGEAAILPGDKIEITELPVGTWTHNYKENVLEPMLGTDKVKPLISEYREYNTDTTVRFVVSLLPGKLSEIEAEGIHKVFKLQTTISMTCMNAFDYNCCLEKYDKVEEILREFYDLRVKYYVRRKDYLEGQLQAEADKLSNQARFILKKCDKGLVIENKKRKAMVEELIKRGYAPDPIADWKKRASKIQGLTALEDDDAQESEEEEPEPDPKGKPVDPDKAFQQLKEVKKFNYLLGMSMWMLTKEKKDELLKQRDQKLTELTTLKNKTAPMLWREDLDAFLIKLDEVEDKERREELNVNKKTSKAMAGKKNRKSMFDIIPSENGRRVEPKISDDLIKRIQAAEKAKTRKEIKKEYDPDDPTGISPSSGEKKPKARVKKEKPEKAEKPDKVDKAEKTDGLKQTKLTFKKEPKKKKMTFSGSSSGEMSASDAEVEVLVPRERTNARRAATRVQKYKDGSDDSGSDSEPELLDNKIDSDHEAPQTLSISDEDDDFNIKKNPAKKPAEMDSDCLFDSLIEDAKKDEPQKTLTKSKSESILIRRLNIERQRRCDTSVPPKEKAAPKRKLMNVDKDEKKTKKRPARVMLDQDSDDEDSIFDSKKGKKKTAANPKKKAKKKVESDSESDFNISDSSLSD.

A disordered region spans residues 8 to 30 (FNKMSSPKQNGTGEPAPAKGQKG). Residues 9–19 (NKMSSPKQNGT) are compositionally biased toward polar residues. Residues N99, N128, 156-158 (SSN), and 169-176 (GRNGYGAK) contribute to the ATP site. The tract at residues 351–353 (KKK) is interaction with DNA. ATP is bound at residue 385–387 (QTK). The Toprim domain occupies 463–580 (CTLILTEGDS…ELLKLPFLEE (118 aa)). Positions 469, 549, and 551 each coordinate Mg(2+). One can recognise a Topo IIA-type catalytic domain in the interval 723–1192 (IPSMIDGLKP…TAPMLWREDL (470 aa)). Y813 functions as the O-(5'-phospho-DNA)-tyrosine intermediate in the catalytic mechanism. Residues 996-1005 (KLQTTISMTC) form an interaction with DNA region. 4 disordered regions span residues 1107-1134 (TALE…VDPD), 1209-1249 (EELN…ISDD), 1261-1423 (KTRK…MDSD), and 1459-1547 (RQRR…SLSD). Residues 1109-1123 (LEDDDAQESEEEEPE) are compositionally biased toward acidic residues. Over residues 1124–1134 (PDPKGKPVDPD) the composition is skewed to basic and acidic residues. A compositionally biased stretch (basic residues) spans 1216 to 1228 (KTSKAMAGKKNRK). Composition is skewed to basic and acidic residues over residues 1238-1249 (NGRRVEPKISDD) and 1294-1315 (EKPE…DGLK). Over residues 1331 to 1344 (TFSGSSSGEMSASD) the composition is skewed to low complexity. Residues 1373 to 1383 (DDSGSDSEPEL) are compositionally biased toward acidic residues. 2 stretches are compositionally biased toward basic and acidic residues: residues 1384 to 1394 (LDNKIDSDHEA) and 1459 to 1488 (RQRR…DEKK). The segment covering 1513 to 1528 (KGKKKTAANPKKKAKK) has biased composition (basic residues). The segment covering 1537–1547 (DFNISDSSLSD) has biased composition (polar residues).

The protein belongs to the type II topoisomerase family. In terms of assembly, homodimer. Mg(2+) serves as cofactor. The cofactor is Mn(2+). Ca(2+) is required as a cofactor.

It localises to the nucleus. The enzyme catalyses ATP-dependent breakage, passage and rejoining of double-stranded DNA.. Functionally, control of topological states of DNA by transient breakage and subsequent rejoining of DNA strands. Topoisomerase II makes double-strand breaks. The sequence is that of DNA topoisomerase 2 (TOP2) from Bombyx mori (Silk moth).